The chain runs to 576 residues: Proline--tRNA ligase (576 aa).

It belongs to the class-II aminoacyl-tRNA synthetase family. ProS type 1 subfamily. As to quaternary structure, homodimer.

It localises to the cytoplasm. It catalyses the reaction tRNA(Pro) + L-proline + ATP = L-prolyl-tRNA(Pro) + AMP + diphosphate. Its function is as follows. Catalyzes the attachment of proline to tRNA(Pro) in a two-step reaction: proline is first activated by ATP to form Pro-AMP and then transferred to the acceptor end of tRNA(Pro). As ProRS can inadvertently accommodate and process non-cognate amino acids such as alanine and cysteine, to avoid such errors it has two additional distinct editing activities against alanine. One activity is designated as 'pretransfer' editing and involves the tRNA(Pro)-independent hydrolysis of activated Ala-AMP. The other activity is designated 'posttransfer' editing and involves deacylation of mischarged Ala-tRNA(Pro). The misacylated Cys-tRNA(Pro) is not edited by ProRS. This is Proline--tRNA ligase from Bordetella bronchiseptica (strain ATCC BAA-588 / NCTC 13252 / RB50) (Alcaligenes bronchisepticus).